Here is a 1127-residue protein sequence, read N- to C-terminus: Nck-associated protein 1-like (1127 aa).

Positions 638-670 are disordered; the sequence is KAKNKKTRKQRQTPRKGEPERDKPGAESHRKNR. Residues 639–651 are compositionally biased toward basic residues; that stretch reads AKNKKTRKQRQTP. Over residues 652 to 666 the composition is skewed to basic and acidic residues; it reads RKGEPERDKPGAESH. A helical transmembrane segment spans residues 996 to 1016; that stretch reads VACLLLIFLAVSLPLLATDPS.

The protein belongs to the HEM-1/HEM-2 family. In terms of assembly, in hematopoietic cells, component of the WAVE2 complex composed of ABI1, CYFIP1/SRA1, NCKAP1L/HEM1 and WASF2/WAVE2. Interacts with ARHGAP4, PIK3C3/VPS34 and PPP1R12A/MYPT1. Interacts with mammalian target of rapamycin complex 2 (mTORC2) components, including MTOR and RICTOR. Expressed only in cells of hematopoietic origin. Expressed in neutrophils (at protein level). Expressed in T-cells (at protein level).

Its subcellular location is the cell membrane. It is found in the cytoplasm. In terms of biological role, essential hematopoietic-specific regulator of the actin cytoskeleton. Controls lymphocyte development, activation, proliferation and homeostasis, erythrocyte membrane stability, as well as phagocytosis and migration by neutrophils and macrophages. Component of the WAVE2 complex which signals downstream of RAC to stimulate F-actin polymerization. Required for stabilization and/or translation of the WAVE2 complex proteins in hematopoietic cells. Within the WAVE2 complex, enables the cortical actin network to restrain excessive degranulation and granule release by T-cells. Required for efficient T-lymphocyte and neutrophil migration. Exhibits complex cycles of activation and inhibition to generate waves of propagating the assembly with actin. Also involved in mechanisms WAVE-independent to regulate myosin and actin polymerization during neutrophil chemotaxis. In T-cells, required for proper mechanistic target of rapamycin complex 2 (mTORC2)-dependent AKT phosphorylation, cell proliferation and cytokine secretion, including that of IL2 and TNF. The protein is Nck-associated protein 1-like of Homo sapiens (Human).